Consider the following 580-residue polypeptide: Conglutin beta 3 (580 aa).

The first 30 residues, 1–30 (MAKMRVRFPTLVLLLGIVFLMAVSIGIAYG), serve as a signal peptide directing secretion. Basic and acidic residues-rich tracts occupy residues 37–72 (NHERPQEREQEERDPRQQPRPHHQEEQEREHRRESE) and 79–92 (REQRREPRREREQE). The disordered stretch occupies residues 37–165 (NHERPQEREQ…DSRRQRNPYY (129 aa)). The segment covering 124 to 133 (QGSSSSSRRQ) has biased composition (low complexity). Positions 134-145 (SGYERREQREER) are enriched in basic and acidic residues. Cupin type-1 domains lie at 164–322 (YYFS…EEIQ) and 381–538 (FNLR…EDVE). N-linked (GlcNAc...) asparagine glycosylation is found at Asn229 and Asn488. Residues 549–569 (FANAQPQQQQQREREGRHGRR) form a disordered region.

It belongs to the 7S seed storage protein family. In terms of assembly, component of globulins complexes which accumulate in seeds.

Functionally, seed storage protein. Accumulates during seed development and is hydrolyzed after germination to provide a carbon and nitrogen source for the developing seedling. This Lupinus angustifolius (Narrow-leaved blue lupine) protein is Conglutin beta 3.